Reading from the N-terminus, the 433-residue chain is Histidinol dehydrogenase homolog (433 aa).

Gln-249 and His-252 together coordinate Zn(2+). Catalysis depends on proton acceptor residues Glu-319 and His-320. Positions 353 and 412 each coordinate Zn(2+).

This sequence belongs to the histidinol dehydrogenase family. Zn(2+) is required as a cofactor.

The chain is Histidinol dehydrogenase homolog from Ruegeria pomeroyi (strain ATCC 700808 / DSM 15171 / DSS-3) (Silicibacter pomeroyi).